We begin with the raw amino-acid sequence, 175 residues long: MVSFPVLAAGGITDINPGLTLWTGITFLVLLFVLGKFAWGPIVKMLAERERTIREAIDSAKRERTEAERLLAEQKALLGKAAREAAELARRNQQEVEAMRQELTARARKEADDLVATARKQIEEEKTKAMSELRAVVADLAIDAASRLVKANLDDASQRKLVEDYIAQLPANRAA.

Residues T23 to V43 form a helical membrane-spanning segment.

It belongs to the ATPase B chain family. F-type ATPases have 2 components, F(1) - the catalytic core - and F(0) - the membrane proton channel. F(1) has five subunits: alpha(3), beta(3), gamma(1), delta(1), epsilon(1). F(0) has three main subunits: a(1), b(2) and c(10-14). The alpha and beta chains form an alternating ring which encloses part of the gamma chain. F(1) is attached to F(0) by a central stalk formed by the gamma and epsilon chains, while a peripheral stalk is formed by the delta and b chains.

It localises to the cell inner membrane. F(1)F(0) ATP synthase produces ATP from ADP in the presence of a proton or sodium gradient. F-type ATPases consist of two structural domains, F(1) containing the extramembraneous catalytic core and F(0) containing the membrane proton channel, linked together by a central stalk and a peripheral stalk. During catalysis, ATP synthesis in the catalytic domain of F(1) is coupled via a rotary mechanism of the central stalk subunits to proton translocation. In terms of biological role, component of the F(0) channel, it forms part of the peripheral stalk, linking F(1) to F(0). The sequence is that of ATP synthase subunit b from Anaeromyxobacter sp. (strain Fw109-5).